The sequence spans 384 residues: Chaperone protein DnaJ (384 aa).

In terms of domain architecture, J spans 5–70; the sequence is DFYEVLGVSK…DKKAAYDRYG (66 aa). Residues 143 to 221 form a CR-type zinc finger; sequence GAQKTITVPG…CHGSGRIEKE (79 aa). Residues Cys156, Cys159, Cys173, Cys176, Cys195, Cys198, Cys209, and Cys212 each contribute to the Zn(2+) site. CXXCXGXG motif repeat units lie at residues 156 to 163, 173 to 180, 195 to 202, and 209 to 216; these read CGSCNGTG, CPTCSGLG, CPTCGGQG, and CRVCHGSG.

It belongs to the DnaJ family. As to quaternary structure, homodimer. It depends on Zn(2+) as a cofactor.

It localises to the cytoplasm. Its function is as follows. Participates actively in the response to hyperosmotic and heat shock by preventing the aggregation of stress-denatured proteins and by disaggregating proteins, also in an autonomous, DnaK-independent fashion. Unfolded proteins bind initially to DnaJ; upon interaction with the DnaJ-bound protein, DnaK hydrolyzes its bound ATP, resulting in the formation of a stable complex. GrpE releases ADP from DnaK; ATP binding to DnaK triggers the release of the substrate protein, thus completing the reaction cycle. Several rounds of ATP-dependent interactions between DnaJ, DnaK and GrpE are required for fully efficient folding. Also involved, together with DnaK and GrpE, in the DNA replication of plasmids through activation of initiation proteins. This chain is Chaperone protein DnaJ, found in Rhodobacter capsulatus (Rhodopseudomonas capsulata).